The chain runs to 49 residues: Large ribosomal subunit protein bL33A (49 aa).

It belongs to the bacterial ribosomal protein bL33 family.

The sequence is that of Large ribosomal subunit protein bL33A from Mycoplasmopsis agalactiae (strain NCTC 10123 / CIP 59.7 / PG2) (Mycoplasma agalactiae).